Reading from the N-terminus, the 261-residue chain is 3-hydroxyacyl-CoA dehydrogenase type-2 (261 aa).

Alanine 2 carries the N-acetylalanine modification. 2 residues coordinate NAD(+): serine 20 and aspartate 41. Residue lysine 53 is modified to N6-acetyllysine; alternate. At lysine 53 the chain carries N6-succinyllysine; alternate. Valine 65 is an NAD(+) binding site. Lysine 69 carries the post-translational modification N6-acetyllysine. Cysteine 91 is an NAD(+) binding site. N6-acetyllysine is present on residues lysine 99 and lysine 105. Lysine 107 is modified (N6-acetyllysine; alternate). Lysine 107 is modified (N6-succinyllysine; alternate). Substrate is bound at residue serine 155. NAD(+)-binding residues include tyrosine 168, lysine 172, phenylalanine 201, and threonine 203. Tyrosine 168 serves as the catalytic Proton acceptor. Lysine 212 is subject to N6-acetyllysine; alternate. Lysine 212 bears the N6-succinyllysine; alternate mark.

This sequence belongs to the short-chain dehydrogenases/reductases (SDR) family. As to quaternary structure, homotetramer. Component of mitochondrial ribonuclease P, a complex composed of TRMT10C/MRPP1, HSD17B10/MRPP2 and PRORP/MRPP3. Interacts with TRMT10C/MRPP1; forming the MRPP1-MRPP2 subcomplex of the mitochondrial ribonuclease P complex.

Its subcellular location is the mitochondrion. It localises to the mitochondrion matrix. The protein localises to the mitochondrion nucleoid. The catalysed reaction is a (3S)-3-hydroxyacyl-CoA + NAD(+) = a 3-oxoacyl-CoA + NADH + H(+). The enzyme catalyses (2S,3S)-3-hydroxy-2-methylbutanoyl-CoA + NAD(+) = 2-methyl-3-oxobutanoyl-CoA + NADH + H(+). It carries out the reaction testosterone + NAD(+) = androst-4-ene-3,17-dione + NADH + H(+). It catalyses the reaction 5alpha-androstane-3alpha,17beta-diol + NAD(+) = 17beta-hydroxy-5alpha-androstan-3-one + NADH + H(+). The catalysed reaction is 17beta-estradiol + NAD(+) = estrone + NADH + H(+). The enzyme catalyses cholate + NAD(+) = 3alpha,12alpha-dihydroxy-7-oxo-5beta-cholanate + NADH + H(+). It carries out the reaction (3S)-3-hydroxybutanoyl-CoA + NAD(+) = acetoacetyl-CoA + NADH + H(+). It catalyses the reaction (3S)-hydroxyoctanoyl-CoA + NAD(+) = 3-oxooctanoyl-CoA + NADH + H(+). The catalysed reaction is (3S)-hydroxyhexadecanoyl-CoA + NAD(+) = 3-oxohexadecanoyl-CoA + NADH + H(+). The enzyme catalyses 17beta-hydroxy-5alpha-androstan-3-one + NAD(+) = 5alpha-androstan-3,17-dione + NADH + H(+). It carries out the reaction 5alpha-pregnan-20beta-ol-3-one + NAD(+) = 5alpha-pregnane-3,20-dione + NADH + H(+). It catalyses the reaction 3alpha-hydroxy-5alpha-pregnan-20-one + NAD(+) = 5alpha-pregnane-3,20-dione + NADH + H(+). The catalysed reaction is cortisone + NAD(+) = 17alpha-hydroxypregn-4-en-3,11,20-trione-21-al + NADH + H(+). The enzyme catalyses 11-dehydrocorticosterone + NAD(+) = pregn-4-ene-3,11,20,21-tetraone + NADH + H(+). It carries out the reaction cortisol + NAD(+) = 11beta,17alpha-dihydroxypregn-4-ene-3,20,21-trione + NADH + H(+). It catalyses the reaction chenodeoxycholate + NAD(+) = 7-oxolithocholate + NADH + H(+). The catalysed reaction is ursodeoxycholate + NAD(+) = 7-oxolithocholate + NADH + H(+). The enzyme catalyses 3beta,7beta-dihydroxy-5beta-cholan-24-oate + NAD(+) = 3beta-hydroxy-7-oxo-5beta-cholan-24-oate + NADH + H(+). The protein operates within amino-acid degradation; L-isoleucine degradation. It participates in lipid metabolism; fatty acid beta-oxidation. It functions in the pathway steroid metabolism. Its pathway is lipid metabolism; bile acid biosynthesis. Mitochondrial dehydrogenase involved in pathways of fatty acid, branched-chain amino acid and steroid metabolism. Acts as (S)-3-hydroxyacyl-CoA dehydrogenase in mitochondrial fatty acid beta-oxidation, a major degradation pathway of fatty acids. Catalyzes the third step in the beta-oxidation cycle, namely the reversible conversion of (S)-3-hydroxyacyl-CoA to 3-ketoacyl-CoA. Preferentially accepts straight medium- and short-chain acyl-CoA substrates with highest efficiency for (3S)-hydroxybutanoyl-CoA. Acts as 3-hydroxy-2-methylbutyryl-CoA dehydrogenase in branched-chain amino acid catabolic pathway. Catalyzes the oxidation of 3-hydroxy-2-methylbutanoyl-CoA into 2-methyl-3-oxobutanoyl-CoA, a step in isoleucine degradation pathway. Has hydroxysteroid dehydrogenase activity toward steroid hormones and bile acids. Catalyzes the oxidation of 3alpha-, 17beta-, 20beta- and 21-hydroxysteroids and 7alpha- and 7beta-hydroxy bile acids. Oxidizes allopregnanolone/brexanolone at the 3alpha-hydroxyl group, which is known to be critical for the activation of gamma-aminobutyric acid receptors (GABAARs) chloride channel. Has phospholipase C-like activity toward cardiolipin and its oxidized species. Likely oxidizes the 2'-hydroxyl in the head group of cardiolipin to form a ketone intermediate that undergoes nucleophilic attack by water and fragments into diacylglycerol, dihydroxyacetone and orthophosphate. Has higher affinity for cardiolipin with oxidized fatty acids and may degrade these species during the oxidative stress response to protect cells from apoptosis. By interacting with intracellular amyloid-beta, it may contribute to the neuronal dysfunction associated with Alzheimer disease (AD). Essential for structural and functional integrity of mitochondria. In terms of biological role, in addition to mitochondrial dehydrogenase activity, moonlights as a component of mitochondrial ribonuclease P, a complex that cleaves tRNA molecules in their 5'-ends. Together with TRMT10C/MRPP1, forms a subcomplex of the mitochondrial ribonuclease P, named MRPP1-MRPP2 subcomplex, which displays functions that are independent of the ribonuclease P activity. The MRPP1-MRPP2 subcomplex catalyzes the formation of N(1)-methylguanine and N(1)-methyladenine at position 9 (m1G9 and m1A9, respectively) in tRNAs; HSD17B10/MRPP2 acting as a non-catalytic subunit. The MRPP1-MRPP2 subcomplex also acts as a tRNA maturation platform: following 5'-end cleavage by the mitochondrial ribonuclease P complex, the MRPP1-MRPP2 subcomplex enhances the efficiency of 3'-processing catalyzed by ELAC2, retains the tRNA product after ELAC2 processing and presents the nascent tRNA to the mitochondrial CCA tRNA nucleotidyltransferase TRNT1 enzyme. Associates with mitochondrial DNA complexes at the nucleoids to initiate RNA processing and ribosome assembly. This chain is 3-hydroxyacyl-CoA dehydrogenase type-2 (Hsd17b10), found in Mus musculus (Mouse).